The sequence spans 896 residues: Bifunctional glutamine synthetase adenylyltransferase/adenylyl-removing enzyme (896 aa).

Positions 1 to 411 are adenylyl removase; sequence MSDNRLDTAR…LFNEILSEPE (411 aa). An adenylyl transferase region spans residues 417–896; it reads NSEWQWAWQE…EVFGEEAATA (480 aa).

Belongs to the GlnE family. Requires Mg(2+) as cofactor.

The catalysed reaction is [glutamine synthetase]-O(4)-(5'-adenylyl)-L-tyrosine + phosphate = [glutamine synthetase]-L-tyrosine + ADP. The enzyme catalyses [glutamine synthetase]-L-tyrosine + ATP = [glutamine synthetase]-O(4)-(5'-adenylyl)-L-tyrosine + diphosphate. In terms of biological role, involved in the regulation of glutamine synthetase GlnA, a key enzyme in the process to assimilate ammonia. When cellular nitrogen levels are high, the C-terminal adenylyl transferase (AT) inactivates GlnA by covalent transfer of an adenylyl group from ATP to specific tyrosine residue of GlnA, thus reducing its activity. Conversely, when nitrogen levels are low, the N-terminal adenylyl removase (AR) activates GlnA by removing the adenylyl group by phosphorolysis, increasing its activity. The regulatory region of GlnE binds the signal transduction protein PII (GlnB) which indicates the nitrogen status of the cell. In Neisseria meningitidis serogroup A / serotype 4A (strain DSM 15465 / Z2491), this protein is Bifunctional glutamine synthetase adenylyltransferase/adenylyl-removing enzyme.